We begin with the raw amino-acid sequence, 33 residues long: Maurocalcin (33 aa).

3 disulfide bridges follow: Cys3/Cys17, Cys10/Cys21, and Cys16/Cys32. The interval 22–24 is essential for stimulation of [3H]ryanodine binding to RYR; sequence KRR.

The protein belongs to the scorpion calcin family. In terms of processing, the non-natural D-maurocalcin (a chiral analog of maurocalcin composed of D-amino acids) completely loses the ability to stimulate [3H]ryanodine binding and calcium release. Its protease resistance, combined with its efficient cell penetration at concentrations devoid of cell toxicity, suggests that it should be an excellent vector for in vivo applications. As to expression, expressed by the venom gland.

The protein localises to the secreted. This toxin stabilizes ryanodine receptor 1 (RyR1) opening in a long-lasting subconductance state (48%-60% of the full conductance state). Furthermore, it triggers calcium release from sarcoplasmic vesicles (6.6 nM are enough to induce a sharp release, and 60% of the total calcium is released after toxin (100 nM) addition) probably by acting as a cell-penetrating peptide (CPP). In addition, it has been shown to dose-dependently stimulate ryanodine binding to RyR1 (EC(50)=12.5-26.4 nM). It also augments the bell-shaped calcium-[3H]ryanodine binding curve that is maximal at about 10 uM calcium concentration. It binds a different site as ryanodine. It acts synergistically with caffeine. In vivo, intracerebroventricular injection into mice causes death. In Scorpio palmatus (Israeli golden scorpion), this protein is Maurocalcin.